Here is a 132-residue protein sequence, read N- to C-terminus: Agouti-signaling protein (132 aa).

An N-terminal signal peptide occupies residues 1–22; sequence MDVTRLLLATLLVFLCFFTAYS. An N-linked (GlcNAc...) asparagine glycan is attached at asparagine 39. The interval 61–87 is disordered; it reads QISRKEAEKKRSSKKEASMKKVARPRT. The span at 63–79 shows a compositional bias: basic and acidic residues; it reads SRKEAEKKRSSKKEASM. Intrachain disulfides connect cysteine 93-cysteine 108, cysteine 100-cysteine 114, cysteine 107-cysteine 125, cysteine 111-cysteine 132, and cysteine 116-cysteine 123. An Agouti domain is found at 93–132; it reads CVTTRDSCKPPAPACCDPCASCQCRFFRSACSCRVLSLNC.

The protein localises to the secreted. Functionally, involved in the regulation of melanogenesis. The binding of ASP to MC1R precludes alpha-MSH initiated signaling and thus blocks production of cAMP, leading to a down-regulation of eumelanogenesis (brown/black pigment) and thus increasing synthesis of pheomelanin (yellow/red pigment). The chain is Agouti-signaling protein (ASIP) from Macaca silenus (Lion-tailed macaque).